An 882-amino-acid chain; its full sequence is Molybdenum cofactor sulfurase (882 aa).

Residue lysine 265 is modified to N6-(pyridoxal phosphate)lysine. The active site involves cysteine 425. The tract at residues 496-546 is disordered; sequence GQPLPLATPGEAGAPPEDSEAQNAVPAARARGSSSPQEDTSPHSGVWNNSP. Residues 527–546 are compositionally biased toward polar residues; the sequence is GSSSPQEDTSPHSGVWNNSP. Serine 528 and serine 530 each carry phosphoserine. An MOSC domain is found at 707–868; it reads KQSSDFQRNA…LSVGSQVLPL (162 aa).

This sequence belongs to the class-V pyridoxal-phosphate-dependent aminotransferase family. MOCOS subfamily. It depends on pyridoxal 5'-phosphate as a cofactor. In terms of tissue distribution, ubiquitously expressed.

It carries out the reaction Mo-molybdopterin + L-cysteine + AH2 = thio-Mo-molybdopterin + L-alanine + A + H2O. It functions in the pathway cofactor biosynthesis; molybdopterin biosynthesis. In terms of biological role, sulfurates the molybdenum cofactor. Sulfation of molybdenum is essential for xanthine dehydrogenase (XDH) and aldehyde oxidase (ADO) enzymes in which molybdenum cofactor is liganded by 1 oxygen and 1 sulfur atom in active form. This chain is Molybdenum cofactor sulfurase, found in Bos taurus (Bovine).